The primary structure comprises 574 residues: Laccase-12 (574 aa).

An N-terminal signal peptide occupies residues 1–27 (MAAASSVLRCCLLVAALMTLSAMGAEA). Plastocyanin-like domains lie at 35–151 (DVQT…PPAG) and 161–314 (EEVP…YDDP). Asn81 carries N-linked (GlcNAc...) asparagine glycosylation. Cu cation-binding residues include His85, His87, His130, and His132. N-linked (GlcNAc...) asparagine glycosylation is found at Asn173, Asn190, Asn206, Asn242, Asn302, Asn335, Asn342, Asn381, Asn388, Asn398, Asn434, Asn441, and Asn447. The Plastocyanin-like 3 domain occupies 424–558 (NFPYYPLNPF…KMAWLVLDGS (135 aa)). Cu cation-binding residues include His475, His478, His480, His537, Cys538, His539, and His543.

It belongs to the multicopper oxidase family. Requires Cu cation as cofactor.

It is found in the secreted. It localises to the extracellular space. The protein localises to the apoplast. It carries out the reaction 4 hydroquinone + O2 = 4 benzosemiquinone + 2 H2O. Its function is as follows. Lignin degradation and detoxification of lignin-derived products. The sequence is that of Laccase-12 (LAC12) from Oryza sativa subsp. japonica (Rice).